The sequence spans 572 residues: Proline--tRNA ligase (572 aa).

This sequence belongs to the class-II aminoacyl-tRNA synthetase family. ProS type 1 subfamily. As to quaternary structure, homodimer.

The protein resides in the cytoplasm. It carries out the reaction tRNA(Pro) + L-proline + ATP = L-prolyl-tRNA(Pro) + AMP + diphosphate. Catalyzes the attachment of proline to tRNA(Pro) in a two-step reaction: proline is first activated by ATP to form Pro-AMP and then transferred to the acceptor end of tRNA(Pro). As ProRS can inadvertently accommodate and process non-cognate amino acids such as alanine and cysteine, to avoid such errors it has two additional distinct editing activities against alanine. One activity is designated as 'pretransfer' editing and involves the tRNA(Pro)-independent hydrolysis of activated Ala-AMP. The other activity is designated 'posttransfer' editing and involves deacylation of mischarged Ala-tRNA(Pro). The misacylated Cys-tRNA(Pro) is not edited by ProRS. This chain is Proline--tRNA ligase, found in Caldicellulosiruptor bescii (strain ATCC BAA-1888 / DSM 6725 / KCTC 15123 / Z-1320) (Anaerocellum thermophilum).